A 447-amino-acid polypeptide reads, in one-letter code: Pup--protein ligase 2 (447 aa).

E4 provides a ligand contact to Mg(2+). ATP is bound at residue R48. Y50 is a Mg(2+) binding site. Residue D52 is the Proton acceptor of the active site. E58 serves as a coordination point for Mg(2+). ATP is bound by residues T61 and W414.

The protein belongs to the Pup ligase/Pup deamidase family. Pup-conjugating enzyme subfamily.

The enzyme catalyses ATP + [prokaryotic ubiquitin-like protein]-L-glutamate + [protein]-L-lysine = ADP + phosphate + N(6)-([prokaryotic ubiquitin-like protein]-gamma-L-glutamyl)-[protein]-L-lysine.. Its pathway is protein degradation; proteasomal Pup-dependent pathway. It functions in the pathway protein modification; protein pupylation. Catalyzes the covalent attachment of the prokaryotic ubiquitin-like protein modifier Pup to the proteasomal substrate proteins, thereby targeting them for proteasomal degradation. This tagging system is termed pupylation. The ligation reaction involves the side-chain carboxylate of the C-terminal glutamate of Pup and the side-chain amino group of a substrate lysine. This chain is Pup--protein ligase 2, found in Rhodococcus erythropolis (Arthrobacter picolinophilus).